The chain runs to 117 residues: MSRVKGGVRTRARHKKILKLAKGYFGAKSKNFRIANQAVMKSLVYAYRDRRARKRDFRKLWITRINAAARMNGLSYSKFMNGLKKSGIALNRKMLAEMAVNDAEAFAQLVEKVKAVI.

Belongs to the bacterial ribosomal protein bL20 family.

Its function is as follows. Binds directly to 23S ribosomal RNA and is necessary for the in vitro assembly process of the 50S ribosomal subunit. It is not involved in the protein synthesizing functions of that subunit. This Acetivibrio thermocellus (strain ATCC 27405 / DSM 1237 / JCM 9322 / NBRC 103400 / NCIMB 10682 / NRRL B-4536 / VPI 7372) (Clostridium thermocellum) protein is Large ribosomal subunit protein bL20.